The following is an 89-amino-acid chain: Large ribosomal subunit protein bL27 (89 aa).

Residues 1–26 are disordered; sequence MATKKAGGSSKNGRDSAGRRLGLKKT.

It belongs to the bacterial ribosomal protein bL27 family.

The chain is Large ribosomal subunit protein bL27 from Orientia tsutsugamushi (strain Boryong) (Rickettsia tsutsugamushi).